The following is a 334-amino-acid chain: N-acetyl-gamma-glutamyl-phosphate reductase (334 aa).

The active site involves Cys154.

The protein belongs to the NAGSA dehydrogenase family. Type 1 subfamily.

It is found in the cytoplasm. The enzyme catalyses N-acetyl-L-glutamate 5-semialdehyde + phosphate + NADP(+) = N-acetyl-L-glutamyl 5-phosphate + NADPH + H(+). It functions in the pathway amino-acid biosynthesis; L-arginine biosynthesis; N(2)-acetyl-L-ornithine from L-glutamate: step 3/4. Catalyzes the NADPH-dependent reduction of N-acetyl-5-glutamyl phosphate to yield N-acetyl-L-glutamate 5-semialdehyde. This chain is N-acetyl-gamma-glutamyl-phosphate reductase, found in Escherichia coli O157:H7.